The sequence spans 93 residues: SH3 domain-binding glutamic acid-rich-like protein 3 (93 aa).

An N-acetylserine modification is found at serine 2. One can recognise a Glutaredoxin domain in the interval 2 to 93 (SGLRVYSTSV…NTLQEFLKLA (92 aa)). Threonine 9 carries O-linked (GalNAc...) threonine glycosylation.

This sequence belongs to the SH3BGR family. In terms of assembly, interacts with MYO1C (via its IQ motifs); the interaction is dependent on calcium and takes place at membrane ruffles. May be glycosylated. As to expression, expressed in heart, liver, lung, kidney, spleen, thymus, ovarian follicles, skeletal muscle, brain, lymph node and mammary epithelial and stromal cells (at protein level).

Its subcellular location is the cytoplasm. The protein localises to the cytosol. The protein resides in the cell projection. It is found in the ruffle membrane. It localises to the nucleus. Functionally, could act as a modulator of glutaredoxin biological activity. May play a role in cytoskeleton organization. In Rattus norvegicus (Rat), this protein is SH3 domain-binding glutamic acid-rich-like protein 3.